Reading from the N-terminus, the 438-residue chain is uncharacterized protein (438 aa).

The residue at position 273 (Lys273) is an N6-(pyridoxal phosphate)lysine.

The protein belongs to the class-III pyridoxal-phosphate-dependent aminotransferase family. The cofactor is pyridoxal 5'-phosphate.

The protein resides in the mitochondrion. This is an uncharacterized protein from Schizosaccharomyces pombe (strain 972 / ATCC 24843) (Fission yeast).